Reading from the N-terminus, the 334-residue chain is Ferrochelatase 1 (334 aa).

Fe cation is bound by residues His-201 and Glu-282.

This sequence belongs to the ferrochelatase family.

The protein localises to the cytoplasm. It carries out the reaction heme b + 2 H(+) = protoporphyrin IX + Fe(2+). It participates in porphyrin-containing compound metabolism; protoheme biosynthesis; protoheme from protoporphyrin-IX: step 1/1. In terms of biological role, catalyzes the ferrous insertion into protoporphyrin IX. The chain is Ferrochelatase 1 from Shewanella oneidensis (strain ATCC 700550 / JCM 31522 / CIP 106686 / LMG 19005 / NCIMB 14063 / MR-1).